The following is a 1738-amino-acid chain: Complement C4-B (1738 aa).

Positions 1 to 19 (MRLLWGLAWVFSFCASSLQ) are cleaved as a signal peptide. A disulfide bridge connects residues Cys66 and Cys95. Asn224 carries an N-linked (GlcNAc...) asparagine glycan. Cys633 and Cys667 form a disulfide bridge. The propeptide occupies 674-677 (RQKR). Disulfide bonds link Cys700–Cys726, Cys701–Cys733, and Cys714–Cys734. One can recognise an Anaphylatoxin-like domain in the interval 700-734 (CCQDGMTKLPMKRTCEQRAARVPQQACREPFLSCC). The N-linked (GlcNAc...) asparagine glycan is linked to Asn743. Residues 1006-1009 (CAEQ) constitute a cross-link (isoglutamyl cysteine thioester (Cys-Gln)). N-linked (GlcNAc...) asparagine glycosylation is found at Asn1324 and Asn1387. 3 positions are modified to sulfotyrosine: Tyr1413, Tyr1416, and Tyr1417. Positions 1444 to 1447 (RRRR) are excised as a propeptide. Cystine bridges form between Cys1465–Cys1529, Cys1577–Cys1582, Cys1589–Cys1667, Cys1612–Cys1736, and Cys1712–Cys1721. Residues 1589-1736 (CPRLLRSLER…FLMEFSSRGC (148 aa)) enclose the NTR domain.

In terms of assembly, in absence of complement activation, circulates in blood as a disulfide-linked trimer of an alpha, beta and gamma chain. Complement C4b is composed of complement C4b-A, complement C4 beta and complement C4 gamma chains that are associated via disulfide bonds. Non-enzymatic component of the C3 convertase, also named C4bC2b, composed of the serine protease complement C2b (C2), as well as complement C4b. Non-enzymatic component of the C5 convertase, also named C4bC2bC3b, composed of the serine protease complement C2b (C2), complement C3b, as well as complement C4b. Post-translationally, prior to secretion, the single-chain precursor is enzymatically cleaved by plasminogen (PLG) to yield non-identical chains alpha, beta and gamma. During activation of the complement systems, the alpha chain is cleaved into C4a and C4b by different proteases depending on the complement pathway: C4b stays linked to the beta and gamma chains, while C4a is released in the plasma. The alpha chain is cleaved by C1S to generate C4a and C4b following activation by the classical complement system. The alpha chain is cleaved to generate C4a and C4b by MASP2 following activation by the lectin complement system. The alpha chain is cleaved by GZMK to generate C4a and C4b following activation by the GZMK complement system. Further degradation of C4b by C1 into the inactive fragments C4c and C4d blocks the generation of C3 convertase. The proteolytic cleavages often are incomplete so that many structural forms can be found in plasma. Upon activation, the internal thioester bond reacts with carbohydrate antigens on the target surface to form amide or ester bonds, leading to covalent association with the surface of pathogens. In terms of processing, complement C4b interacts with complement C3b via a thioester linkage.

The protein localises to the secreted. It localises to the cell surface. Its function is as follows. Precursor of non-enzymatic components of the classical, lectin and GZMK complement pathways, which consist in a cascade of proteins that leads to phagocytosis and breakdown of pathogens and signaling that strengthens the adaptive immune system. Non-enzymatic component of C3 and C5 convertases. Generated following cleavage by complement proteases (C1S, MASP2 or GZMK, depending on the complement pathway), it covalently attaches to the surface of pathogens, where it acts as an opsonin that marks the surface of antigens for removal. It then recruits the serine protease complement C2b to form the C3 and C5 convertases, which cleave and activate C3 and C5, respectively, the next components of the complement pathways. Complement C4b-A isotype is responsible for effective binding to form amide bonds with immune aggregates or protein antigens, while complement C4b-B isotype catalyzes the transacylation of the thioester carbonyl group to form ester bonds with carbohydrate antigens. Functionally, putative humoral mediator released following cleavage by complement proteases (C1S, MASP2 or GZMK, depending on the complement pathway). While it is strongly similar to anaphylatoxins, its role is unclear. Was reported to act as a mediator of local inflammatory process; however these effects were probably due to contamination with C3a and/C5a anaphylatoxins in biological assays. The sequence is that of Complement C4-B from Mus musculus (Mouse).